The chain runs to 476 residues: Arginine biosynthesis bifunctional protein ArgJ, mitochondrial (476 aa).

Thr-193, Lys-219, Thr-237, Glu-337, Asn-471, and Ser-476 together coordinate substrate. Thr-237 acts as the Nucleophile in catalysis.

It belongs to the ArgJ family. Heterodimer of an alpha and a beta chain. Post-translationally, the alpha and beta chains are autoproteolytically processed from a single precursor protein within the mitochondrion.

It is found in the mitochondrion matrix. It catalyses the reaction N(2)-acetyl-L-ornithine + L-glutamate = N-acetyl-L-glutamate + L-ornithine. The catalysed reaction is L-glutamate + acetyl-CoA = N-acetyl-L-glutamate + CoA + H(+). It participates in amino-acid biosynthesis; L-arginine biosynthesis; L-ornithine and N-acetyl-L-glutamate from L-glutamate and N(2)-acetyl-L-ornithine (cyclic): step 1/1. It functions in the pathway amino-acid biosynthesis; L-arginine biosynthesis; N(2)-acetyl-L-ornithine from L-glutamate: step 1/4. Its function is as follows. Catalyzes two activities which are involved in the cyclic version of arginine biosynthesis: the synthesis of acetylglutamate from glutamate and acetyl-CoA, and of ornithine by transacetylation between acetylornithine and glutamate. The protein is Arginine biosynthesis bifunctional protein ArgJ, mitochondrial of Cryptococcus neoformans var. neoformans serotype D (strain B-3501A) (Filobasidiella neoformans).